We begin with the raw amino-acid sequence, 878 residues long: MGYPFRALEKKWQAYWRDKRVFCVSEDERFPPERRAYVLDMFPYPSAQGLHVGHPEGYTATDIYCRYLRMGGYNVLHPMGFDAFGLPAENFALKTGTHPRVSTSANCDTFRRQIQSFGFSYDWEREISTADPEYYRWTQWLFLKLYEKGLAYEATAPINWCPSCKTGLANEEVRDACCERCGAEVTRRGVRQWMVRITAYAERLLSDLDELDWPESVKQMQRNWIGKSCGAEIDFPVDAPACSVHDKLPQTIRVYTTRADTLFGVTYLVLAPEHEAVTALTTHAQRAAVQAYVQRAAKKNDLERTDLAKEKTGVFTGAYVRNPINDMRIPVWVGDYVLVSYGTGAVMAVPAHDQRDWDFATRFGLPKLTVVSADYTATVPNSNSPQGAVLQRCVSDEGFVVNSGAFNGLASADARERIVAHLEMRGAGARRVTYRLRDWVFSRQRYWGEPIPLVHCPSCGVVPLPESALPLLLPETADFTPTEDGQGPLARARTWLRVPCPQCASDAVRETNTMPQWAGSCWYYLRYMDPRNKTAFCAPEKERYWAPVALYVGGAEHAVLHLLYARFWHKVLYDLGLVSTKEPFARLVNQGMITSYAYRRKNGALVPHDEVHTNAQGTYVHARTGEKLECVVAKMSKALKNVVNPDDMIAAYGADACRVYEMFMGPLEASKPWNTQGLVGVFRFLEKIWVLAGRVAAANGIPQDSRAEPPGDLHAQKKSCSMYALETLLHRTIQKVTDDTSALSFNTAISQMMIFVNEATRVARRMPLPSKMWEMFVKILSPYAPHLAEELWEMCGHTHTIAYEPWPQVDPARVAPHVCSVVVQVNGKVRDTFSVAPNAPNEELEQKARETAGARKFLGTQQPKRVVIVPNKLVNFVL.

Positions 43–54 match the 'HIGH' region motif; it reads PYPSAQGLHVGH. Residues 634–638 carry the 'KMSKS' region motif; sequence KMSKA. Lysine 637 provides a ligand contact to ATP.

The protein belongs to the class-I aminoacyl-tRNA synthetase family.

The protein localises to the cytoplasm. It carries out the reaction tRNA(Leu) + L-leucine + ATP = L-leucyl-tRNA(Leu) + AMP + diphosphate. The polypeptide is Leucine--tRNA ligase (Treponema pallidum subsp. pallidum (strain SS14)).